The sequence spans 294 residues: Proline iminopeptidase (294 aa).

The AB hydrolase-1 domain occupies P28–E278. The Nucleophile role is filled by S106. The active site involves D245. H272 (proton donor) is an active-site residue.

This sequence belongs to the peptidase S33 family. Homotrimer.

It localises to the cell envelope. It catalyses the reaction Release of N-terminal proline from a peptide.. Its activity is regulated as follows. Inhibited by 3,4-DCI, but no significant effect on enzyme activity by pepstatin A, E-64, 1,10-phenanthroline or EDTA. Its function is as follows. Releases the N-terminal proline from various substrates. Cleaves Pro-betaNA (L-prolyl-beta-naphthylamide) effectively. This chain is Proline iminopeptidase (pip), found in Lactobacillus delbrueckii subsp. lactis.